A 127-amino-acid chain; its full sequence is Riboflavin kinase (127 aa).

10-15 is a CDP binding site; that stretch reads GLGEGR. Mg(2+)-binding residues include Thr-39 and Asn-41. Positions 96 and 104 each coordinate FMN. 109-112 contributes to the CDP binding site; it reads IQLR.

This sequence belongs to the archaeal riboflavin kinase family. It depends on Mg(2+) as a cofactor.

It carries out the reaction riboflavin + CTP = CDP + FMN + H(+). It functions in the pathway cofactor biosynthesis; FMN biosynthesis; FMN from riboflavin (CTP route): step 1/1. In terms of biological role, catalyzes the CTP-dependent phosphorylation of riboflavin (vitamin B2) to form flavin mononucleotide (FMN). The polypeptide is Riboflavin kinase (Methanococcus maripaludis (strain C5 / ATCC BAA-1333)).